The sequence spans 208 residues: Small ribosomal subunit protein uS4 (208 aa).

The region spanning Thr-98–Ala-164 is the S4 RNA-binding domain.

It belongs to the universal ribosomal protein uS4 family. As to quaternary structure, part of the 30S ribosomal subunit. Contacts protein S5. The interaction surface between S4 and S5 is involved in control of translational fidelity.

Functionally, one of the primary rRNA binding proteins, it binds directly to 16S rRNA where it nucleates assembly of the body of the 30S subunit. In terms of biological role, with S5 and S12 plays an important role in translational accuracy. The chain is Small ribosomal subunit protein uS4 from Ruminiclostridium cellulolyticum (strain ATCC 35319 / DSM 5812 / JCM 6584 / H10) (Clostridium cellulolyticum).